A 241-amino-acid polypeptide reads, in one-letter code: Tumor necrosis factor receptor superfamily member grnd (241 aa).

Residues Met1 to Ala27 form the signal peptide. Topologically, residues Ala28–Gln98 are extracellular. 4 cysteine pairs are disulfide-bonded: Cys35/Cys47, Cys40/Cys54, Cys57/Cys77, and Cys61/Cys73. The N-linked (GlcNAc...) asparagine glycan is linked to Asn63. A helical transmembrane segment spans residues Leu99–Phe119. Residues Leu120–Phe241 lie on the Cytoplasmic side of the membrane.

Interacts (via extracellular cysteine-rich domain) with egr (via secreted TNF-homology soluble form); forms heterohexamers when 3 copies associate with egr trimers. Interacts with Traf6/TRAF2 and veli (via PDZ domain). In terms of processing, N-glycosylated on Asn-63. Glycosylation regulates ligand binding, specifically reducing affinity for the TNF egr, thereby inhibiting activation of JNK signaling. Expressed in the adult midgut; under normal conditions expressed at lower levels than the other TNF receptor wgn.

The protein resides in the apical cell membrane. The protein localises to the cytoplasmic vesicle membrane. Acts as a receptor for TNF-cytokine egr. Plays a role in activation of JNK signaling and is required for egr-induced apoptosis, including in wing imaginal discs during development. May also play an egr-independent role in cell proliferation. TNF receptor involved in triggering JNK-dependent proliferation of the enteroblast-enterocyte lineage in response to stress-induced release of egr by intestinal stem cells and enteroblasts. Involved in regulation of insulin production in response to dietary protein shortage keeping systemic growth in check. Activation in brain insulin producing cells through binding of egr released into the hemolymph in response to dietary amino acid shortage, results in JNK-dependent inhibition of insulin production. This chain is Tumor necrosis factor receptor superfamily member grnd, found in Drosophila melanogaster (Fruit fly).